The following is a 91-amino-acid chain: MASGQESRKELDRKAREGETVVPGGTGGKSVEAQEHLAEGRSRGGQTRREQLGQQGYSEMGKKGGLSTTDESGGERAAREGVTIDESKFTK.

Basic and acidic residues-rich tracts occupy residues 1–19 (MASGQESRKELDRKAREGE) and 32–51 (EAQEHLAEGRSRGGQTRREQ). The disordered stretch occupies residues 1–91 (MASGQESRKE…VTIDESKFTK (91 aa)).

Belongs to the small hydrophilic plant seed protein family.

In terms of biological role, LEA proteins are late embryonic proteins abundant in higher plant seed embryos. They may play an essential role in seed survival and in controlling water exchanges during seed desiccation and imbibition. The sequence is that of Late embryogenesis abundant protein EMB564 from Zea mays (Maize).